Here is a 186-residue protein sequence, read N- to C-terminus: UPF0301 protein Mmc1_0726 (186 aa).

The protein belongs to the UPF0301 (AlgH) family.

This chain is UPF0301 protein Mmc1_0726, found in Magnetococcus marinus (strain ATCC BAA-1437 / JCM 17883 / MC-1).